The chain runs to 158 residues: S-ribosylhomocysteine lyase (158 aa).

3 residues coordinate Fe cation: His56, His60, and Cys125.

Belongs to the LuxS family. Homodimer. The cofactor is Fe cation.

It catalyses the reaction S-(5-deoxy-D-ribos-5-yl)-L-homocysteine = (S)-4,5-dihydroxypentane-2,3-dione + L-homocysteine. Functionally, involved in the synthesis of autoinducer 2 (AI-2) which is secreted by bacteria and is used to communicate both the cell density and the metabolic potential of the environment. The regulation of gene expression in response to changes in cell density is called quorum sensing. Catalyzes the transformation of S-ribosylhomocysteine (RHC) to homocysteine (HC) and 4,5-dihydroxy-2,3-pentadione (DPD). This Leuconostoc mesenteroides subsp. mesenteroides (strain ATCC 8293 / DSM 20343 / BCRC 11652 / CCM 1803 / JCM 6124 / NCDO 523 / NBRC 100496 / NCIMB 8023 / NCTC 12954 / NRRL B-1118 / 37Y) protein is S-ribosylhomocysteine lyase.